A 273-amino-acid polypeptide reads, in one-letter code: Diadenylate cyclase (273 aa).

The next 3 helical transmembrane spans lie at 12 to 32, 37 to 57, and 61 to 81; these read LANI…IMLI, AVQL…SGFF, and TVEW…IIIF. Positions 82–242 constitute a DAC domain; the sequence is QPELRRALET…GGELFRDVSE (161 aa).

Belongs to the adenylate cyclase family. DacA/CdaA subfamily. Probably a homodimer.

The protein resides in the cell membrane. The enzyme catalyses 2 ATP = 3',3'-c-di-AMP + 2 diphosphate. Functionally, catalyzes the condensation of 2 ATP molecules into cyclic di-AMP (c-di-AMP), a signaling compound secreted into the host's cytosol where it triggers the cytosolic surveillance pathway (CSP), a host pathway of innate immunity characterized by expression of beta interferon (IFN-beta) and coregulated genes. Overexpression increases export of c-di-AMP. c-di-AMP is a second messenger that mediates growth, cell wall stability and virulence. The protein is Diadenylate cyclase of Listeria monocytogenes serotype 1/2a (strain 10403S).